The following is a 523-amino-acid chain: Glycerate kinase (523 aa).

Position 60 is a phosphoserine (S60). K200 is subject to N6-acetyllysine.

It belongs to the glycerate kinase type-2 family.

The protein resides in the cytoplasm. It carries out the reaction (R)-glycerate + ATP = (2R)-3-phosphoglycerate + ADP + H(+). The chain is Glycerate kinase (Glyctk) from Rattus norvegicus (Rat).